The sequence spans 345 residues: MSAFQPTIKRRESTKIYVGNVPIGGDAPIAVQSMTNTRTTDVEATVAQIKSLERVGADIVRVSVPTMDAAEAFKQIKQQVNVPLVADIHFDYRIALKVAEYGVDCLRINPGNIGREDRIRAVVDCARDKNIPIRIGVNAGSLEKDLQEKYGEPTPEALLESALRHVEILDRLNFNQFKVSVKASDVFLAVEAYRLLAKAIKQPLHLGITEAGGARAGAVKSAVGLGMLLAEGIGDTLRVSLAADPIEEIKVGFDILKSLRIRSRGINFIACPTCSRQEFDVIGTVNALEQRLEDIITPMDVSIIGCVVNGPGEALVSDLGVTGGNKKAVIILTANVKKSVLITKI.

Positions 271, 274, 306, and 313 each coordinate [4Fe-4S] cluster.

The protein belongs to the IspG family. [4Fe-4S] cluster serves as cofactor.

The catalysed reaction is (2E)-4-hydroxy-3-methylbut-2-enyl diphosphate + oxidized [flavodoxin] + H2O + 2 H(+) = 2-C-methyl-D-erythritol 2,4-cyclic diphosphate + reduced [flavodoxin]. The protein operates within isoprenoid biosynthesis; isopentenyl diphosphate biosynthesis via DXP pathway; isopentenyl diphosphate from 1-deoxy-D-xylulose 5-phosphate: step 5/6. Converts 2C-methyl-D-erythritol 2,4-cyclodiphosphate (ME-2,4cPP) into 1-hydroxy-2-methyl-2-(E)-butenyl 4-diphosphate. The polypeptide is 4-hydroxy-3-methylbut-2-en-1-yl diphosphate synthase (flavodoxin) (Haemophilus influenzae (strain PittEE)).